The sequence spans 230 residues: V-type proton ATPase subunit E1 (230 aa).

Met1 is subject to N-acetylmethionine. Residues 8–67 (RQIQQMVRFIRQEAEEKANEISVSAEEEFNIEKLQLVEAEKKKIRQDYEKKEKQADVRKK) adopt a coiled-coil conformation. A Phosphoserine modification is found at Ser178.

It belongs to the V-ATPase E subunit family. V-ATPase is a heteromultimeric enzyme composed of a peripheral catalytic V1 complex (components A to H) attached to an integral membrane V0 proton pore complex (components: a, c, c'', d and e).

Its subcellular location is the vacuole membrane. In terms of biological role, subunit of the peripheral V1 complex of vacuolar ATPase essential for assembly or catalytic function. V-ATPase is responsible for acidifying a variety of intracellular compartments in eukaryotic cells. Required for Golgi organization and vacuole function in embryogenesis. In Arabidopsis thaliana (Mouse-ear cress), this protein is V-type proton ATPase subunit E1 (VHA-E1).